The chain runs to 226 residues: ATP-dependent dethiobiotin synthetase BioD (226 aa).

12-17 (GIGKTV) contacts ATP. T16 serves as a coordination point for Mg(2+). The active site involves K37. T41 is a substrate binding site. ATP-binding positions include D49, 108–111 (EGAG), and 197–199 (PAG). Positions 49 and 108 each coordinate Mg(2+).

It belongs to the dethiobiotin synthetase family. Homodimer. Mg(2+) serves as cofactor.

Its subcellular location is the cytoplasm. It carries out the reaction (7R,8S)-7,8-diammoniononanoate + CO2 + ATP = (4R,5S)-dethiobiotin + ADP + phosphate + 3 H(+). It participates in cofactor biosynthesis; biotin biosynthesis; biotin from 7,8-diaminononanoate: step 1/2. Functionally, catalyzes a mechanistically unusual reaction, the ATP-dependent insertion of CO2 between the N7 and N8 nitrogen atoms of 7,8-diaminopelargonic acid (DAPA, also called 7,8-diammoniononanoate) to form a ureido ring. The chain is ATP-dependent dethiobiotin synthetase BioD from Mycolicibacterium vanbaalenii (strain DSM 7251 / JCM 13017 / BCRC 16820 / KCTC 9966 / NRRL B-24157 / PYR-1) (Mycobacterium vanbaalenii).